We begin with the raw amino-acid sequence, 674 residues long: DNA ligase (674 aa).

Residues 34 to 38, 83 to 84, and Glu117 contribute to the NAD(+) site; these read DFEFD and SL. Lys119 acts as the N6-AMP-lysine intermediate in catalysis. Arg140, Glu184, Lys297, and Lys321 together coordinate NAD(+). Cys415, Cys418, Cys433, and Cys439 together coordinate Zn(2+). Residues 598 to 674 form the BRCT domain; sequence LVNNNFEGQS…IDEDEFERML (77 aa).

This sequence belongs to the NAD-dependent DNA ligase family. LigA subfamily. The cofactor is Mg(2+). Requires Mn(2+) as cofactor.

It carries out the reaction NAD(+) + (deoxyribonucleotide)n-3'-hydroxyl + 5'-phospho-(deoxyribonucleotide)m = (deoxyribonucleotide)n+m + AMP + beta-nicotinamide D-nucleotide.. Functionally, DNA ligase that catalyzes the formation of phosphodiester linkages between 5'-phosphoryl and 3'-hydroxyl groups in double-stranded DNA using NAD as a coenzyme and as the energy source for the reaction. It is essential for DNA replication and repair of damaged DNA. This chain is DNA ligase, found in Chlorobaculum tepidum (strain ATCC 49652 / DSM 12025 / NBRC 103806 / TLS) (Chlorobium tepidum).